A 184-amino-acid chain; its full sequence is ATP-dependent protease subunit HslV (184 aa).

Threonine 12 is an active-site residue. 3 residues coordinate Na(+): glycine 167, cysteine 170, and threonine 173.

Belongs to the peptidase T1B family. HslV subfamily. In terms of assembly, a double ring-shaped homohexamer of HslV is capped on each side by a ring-shaped HslU homohexamer. The assembly of the HslU/HslV complex is dependent on binding of ATP.

It is found in the cytoplasm. It catalyses the reaction ATP-dependent cleavage of peptide bonds with broad specificity.. Allosterically activated by HslU binding. Functionally, protease subunit of a proteasome-like degradation complex believed to be a general protein degrading machinery. This chain is ATP-dependent protease subunit HslV, found in Wolbachia sp. subsp. Drosophila simulans (strain wRi).